Reading from the N-terminus, the 481-residue chain is Aspartyl/glutamyl-tRNA(Asn/Gln) amidotransferase subunit B (481 aa).

Belongs to the GatB/GatE family. GatB subfamily. Heterotrimer of A, B and C subunits.

It carries out the reaction L-glutamyl-tRNA(Gln) + L-glutamine + ATP + H2O = L-glutaminyl-tRNA(Gln) + L-glutamate + ADP + phosphate + H(+). It catalyses the reaction L-aspartyl-tRNA(Asn) + L-glutamine + ATP + H2O = L-asparaginyl-tRNA(Asn) + L-glutamate + ADP + phosphate + 2 H(+). Functionally, allows the formation of correctly charged Asn-tRNA(Asn) or Gln-tRNA(Gln) through the transamidation of misacylated Asp-tRNA(Asn) or Glu-tRNA(Gln) in organisms which lack either or both of asparaginyl-tRNA or glutaminyl-tRNA synthetases. The reaction takes place in the presence of glutamine and ATP through an activated phospho-Asp-tRNA(Asn) or phospho-Glu-tRNA(Gln). This Pseudomonas putida (strain W619) protein is Aspartyl/glutamyl-tRNA(Asn/Gln) amidotransferase subunit B.